We begin with the raw amino-acid sequence, 408 residues long: Glutaryl-CoA dehydrogenase, mitochondrial (408 aa).

A mitochondrion-targeting transit peptide spans 1–13 (KGGKTQGRSAKSS). Substrate is bound by residues 107–108 (RS) and Ser-156. FAD-binding positions include 147–156 (FGLTEPNHGS), Ser-156, and 182–184 (WIT). Lys-210 carries the post-translational modification N6-acetyllysine. Residue 257–264 (FGCLNNAR) participates in substrate binding. Residues Arg-289, Gln-300, and 357–361 (DMLGG) each bind FAD. Glu-384 serves as the catalytic Proton acceptor. Residue Gly-385 coordinates substrate. FAD-binding positions include Thr-386, 386–388 (THD), and Phe-404.

This sequence belongs to the acyl-CoA dehydrogenase family. As to quaternary structure, homotetramer. The cofactor is FAD.

It localises to the mitochondrion matrix. It carries out the reaction glutaryl-CoA + oxidized [electron-transfer flavoprotein] + 2 H(+) = (2E)-butenoyl-CoA + reduced [electron-transfer flavoprotein] + CO2. It functions in the pathway amino-acid metabolism; lysine degradation. Its pathway is amino-acid metabolism; tryptophan metabolism. Catalyzes the oxidative decarboxylation of glutaryl-CoA to crotonyl-CoA and CO(2) in the degradative pathway of L-lysine, L-hydroxylysine, and L-tryptophan metabolism. It uses electron transfer flavoprotein as its electron acceptor. The sequence is that of Glutaryl-CoA dehydrogenase, mitochondrial (GCDH) from Sus scrofa (Pig).